The sequence spans 170 residues: Adenine phosphoribosyltransferase (170 aa).

Belongs to the purine/pyrimidine phosphoribosyltransferase family. Homodimer.

The protein resides in the cytoplasm. It carries out the reaction AMP + diphosphate = 5-phospho-alpha-D-ribose 1-diphosphate + adenine. It participates in purine metabolism; AMP biosynthesis via salvage pathway; AMP from adenine: step 1/1. Its function is as follows. Catalyzes a salvage reaction resulting in the formation of AMP, that is energically less costly than de novo synthesis. This is Adenine phosphoribosyltransferase from Clostridioides difficile (strain 630) (Peptoclostridium difficile).